The chain runs to 798 residues: ABC transporter G family member 4 (798 aa).

The tract at residues 1-51 (MEDIGNNNFEIIDDKSDEKNDENFEDKNSRNNINEEQILSNQQQQQQQQQQ) is disordered. Residues 12–29 (IDDKSDEKNDENFEDKNS) show a composition bias toward basic and acidic residues. Residues 30 to 41 (RNNINEEQILSN) are compositionally biased toward polar residues. A coiled-coil region spans residues 34–83 (NEEQILSNQQQQQQQQQQQQQQQQQQQQQQQQQQQQQQEQQQFKNEVINT). A compositionally biased stretch (low complexity) spans 42–51 (QQQQQQQQQQ). The ABC transporter domain occupies 211 to 464 (IDIEDIESQV…SIDSNYKCPP (254 aa)). 253–260 (GPSGSGKS) lines the ATP pocket. The next 7 helical transmembrane spans lie at 540-560 (VVFFSKIVIAILIGLLFSACF), 579-599 (LFFFIITSLNLLPYSSISTFV), 628-648 (IVSSFFVVLIITTIIYCIVHL), 656-676 (ILSLISFYMVFLASVFMVIAM), 687-707 (FSYCTGVSVVLVLFSGFLVPI), 713-733 (SFGWIHHIDYLFYGFSSIVII), and 771-791 (SIGILTIWIAFFYILAYIGLY). One can recognise an ABC transmembrane type-2 domain in the interval 540–793 (VVFFSKIVIA…ILAYIGLYKF (254 aa)).

The protein belongs to the ABC transporter superfamily. ABCG family. Eye pigment precursor importer (TC 3.A.1.204) subfamily.

It is found in the membrane. The protein is ABC transporter G family member 4 (abcG4) of Dictyostelium discoideum (Social amoeba).